We begin with the raw amino-acid sequence, 261 residues long: MSLKKSPFFELRSGSVDTLLFTVKTTDLDALRTELVKRFEATPEFFADDVVAIDVRRLADGERVALADIRQMLNDVRMRPVGVVALATQGWAGEAGLPLLEARDRRAPAAKPADEAEPAAVLAVEAAAAPAAAAAPEQSSDPVPTLLQAGGQTLVIDRPLRSGQQIYAKGDLVVLAPVSHGAEIIAEGNIHIYAPLRGRALAGVHGNHDARIFCTCLEPELISIAGIYRTTENPLPADVLGKSVQIRLEEEKLMIEPLRLT.

The protein belongs to the MinC family. Interacts with MinD and FtsZ.

Cell division inhibitor that blocks the formation of polar Z ring septums. Rapidly oscillates between the poles of the cell to destabilize FtsZ filaments that have formed before they mature into polar Z rings. Prevents FtsZ polymerization. The chain is Probable septum site-determining protein MinC from Burkholderia cenocepacia (strain ATCC BAA-245 / DSM 16553 / LMG 16656 / NCTC 13227 / J2315 / CF5610) (Burkholderia cepacia (strain J2315)).